Consider the following 81-residue polypeptide: Photosystem I iron-sulfur center (81 aa).

2 consecutive 4Fe-4S ferredoxin-type domains span residues 1-31 (MSHKVKIYDTCIGCTQCVRACPLDVLEMVPW) and 39-68 (IASSPRTEDCVGCKRCETACPTDFLSIRVY). Positions 11, 14, 17, 21, 48, 51, 54, and 58 each coordinate [4Fe-4S] cluster.

In terms of assembly, the cyanobacterial PSI reaction center is composed of one copy each of PsaA,B,C,D,E,F,I,J,K,L,M and X, and forms trimeric complexes. Requires [4Fe-4S] cluster as cofactor.

The protein resides in the cellular thylakoid membrane. It carries out the reaction reduced [plastocyanin] + hnu + oxidized [2Fe-2S]-[ferredoxin] = oxidized [plastocyanin] + reduced [2Fe-2S]-[ferredoxin]. Apoprotein for the two 4Fe-4S centers FA and FB of photosystem I (PSI); essential for photochemical activity. FB is the terminal electron acceptor of PSI, donating electrons to ferredoxin. The C-terminus interacts with PsaA/B/D and helps assemble the protein into the PSI complex. Required for binding of PsaD and PsaE to PSI. PSI is a plastocyanin/cytochrome c6-ferredoxin oxidoreductase, converting photonic excitation into a charge separation, which transfers an electron from the donor P700 chlorophyll pair to the spectroscopically characterized acceptors A0, A1, FX, FA and FB in turn. This Crocosphaera subtropica (strain ATCC 51142 / BH68) (Cyanothece sp. (strain ATCC 51142)) protein is Photosystem I iron-sulfur center.